The primary structure comprises 365 residues: S-type anion channel SLAH4 (365 aa).

The Cytoplasmic segment spans residues Met-1–Asn-25. A helical transmembrane segment spans residues Leu-26–Phe-46. At Arg-47 to Ala-73 the chain is on the extracellular side. A helical membrane pass occupies residues Tyr-74 to Phe-94. Over Lys-95–Glu-106 the chain is Cytoplasmic. A helical membrane pass occupies residues Phe-107 to Leu-127. The Extracellular portion of the chain corresponds to Gln-128 to Pro-131. A helical transmembrane segment spans residues Met-132 to Leu-152. Residues Thr-153–Arg-168 are Cytoplasmic-facing. The chain crosses the membrane as a helical span at residues Phe-169–Ala-189. Residues Arg-190–Glu-199 lie on the Extracellular side of the membrane. Residues Cys-200–Tyr-220 form a helical membrane-spanning segment. Residues Gln-221–Pro-235 lie on the Cytoplasmic side of the membrane. The chain crosses the membrane as a helical span at residues Val-236–Gly-256. Position 257 (Asn-257) is a topological domain, extracellular. A helical transmembrane segment spans residues Phe-258 to Cys-278. At Arg-279–Asn-291 the chain is on the cytoplasmic side. A helical transmembrane segment spans residues Val-292–Ala-312. The Extracellular portion of the chain corresponds to Gln-313–Ser-321. The chain crosses the membrane as a helical span at residues Val-322–Thr-342. At Ala-343 to Lys-365 the chain is on the cytoplasmic side.

It belongs to the SLAC1 S-type anion channel family. As to quaternary structure, homotrimer.

The protein resides in the cell membrane. Slow, weak voltage-dependent S-type anion efflux channel involved in maintenance of anion homeostasis. This Arabidopsis thaliana (Mouse-ear cress) protein is S-type anion channel SLAH4 (SLAH4).